The chain runs to 93 residues: UPF0147 protein PF0239 (93 aa).

This sequence belongs to the UPF0147 family.

The chain is UPF0147 protein PF0239 from Pyrococcus furiosus (strain ATCC 43587 / DSM 3638 / JCM 8422 / Vc1).